A 112-amino-acid chain; its full sequence is Large ribosomal subunit protein eL30y (112 aa).

This sequence belongs to the eukaryotic ribosomal protein eL30 family.

In Arabidopsis thaliana (Mouse-ear cress), this protein is Large ribosomal subunit protein eL30y (RPL30B).